The chain runs to 577 residues: Arginine--tRNA ligase (577 aa).

Positions 122–132 match the 'HIGH' region motif; the sequence is PNVAKEMHVGH.

This sequence belongs to the class-I aminoacyl-tRNA synthetase family. Monomer.

The protein localises to the cytoplasm. The enzyme catalyses tRNA(Arg) + L-arginine + ATP = L-arginyl-tRNA(Arg) + AMP + diphosphate. The protein is Arginine--tRNA ligase of Aliivibrio fischeri (strain MJ11) (Vibrio fischeri).